A 239-amino-acid polypeptide reads, in one-letter code: MDFFSVQNILVHIPIGAGGYDLSWIEAVGTIAGLLCIGLASLEKISNYFFGLINVTLFGIIFFQIQLYASLLLQVFFFAANIYGWYAWSRQTSQNEAELKIRWLPLPKALSWLAVCVVSIGLMTVFINPVFAFLTRVAVMIMQALGLQVVMPELQPDAFPFWDSCMMVLSIVAMILMTRKYVENWLLWVIINVISVVIFALQGVYAMSLEYIILTFIALNGSRMWINSARERGSRALSH.

Residues 1 to 21 (MDFFSVQNILVHIPIGAGGYD) are Cytoplasmic-facing. The chain crosses the membrane as a helical span at residues 22-42 (LSWIEAVGTIAGLLCIGLASL). Residues 43–48 (EKISNY) lie on the Periplasmic side of the membrane. Residues 49-68 (FFGLINVTLFGIIFFQIQLY) traverse the membrane as a helical segment. At 69 to 71 (ASL) the chain is on the cytoplasmic side. The chain crosses the membrane as a helical span at residues 72-89 (LLQVFFFAANIYGWYAWS). Over 90–109 (RQTSQNEAELKIRWLPLPKA) the chain is Periplasmic. A helical transmembrane segment spans residues 110–127 (LSWLAVCVVSIGLMTVFI). Residues 128–157 (NPVFAFLTRVAVMIMQALGLQVVMPELQPD) are Cytoplasmic-facing. Residues 158–177 (AFPFWDSCMMVLSIVAMILM) traverse the membrane as a helical segment. Topologically, residues 178-183 (TRKYVE) are periplasmic. A helical membrane pass occupies residues 184–206 (NWLLWVIINVISVVIFALQGVYA). Beta-nicotinamide D-riboside-binding residues include tryptophan 188 and asparagine 192. Over 207-239 (MSLEYIILTFIALNGSRMWINSARERGSRALSH) the chain is Cytoplasmic.

The protein belongs to the nicotinamide ribonucleoside (NR) uptake permease (TC 4.B.1) family.

It localises to the cell inner membrane. Functionally, required for nicotinamide riboside transport across the inner membrane. The protein is Nicotinamide riboside transporter PnuC (pnuC) of Escherichia coli (strain K12).